Reading from the N-terminus, the 212-residue chain is Dephospho-CoA kinase (212 aa).

A DPCK domain is found at 8–212 (LVGVTGGLGS…QLLQQAMLRR (205 aa)). Residue 16–21 (GSGKSM) participates in ATP binding.

The protein belongs to the CoaE family.

It is found in the cytoplasm. It catalyses the reaction 3'-dephospho-CoA + ATP = ADP + CoA + H(+). The protein operates within cofactor biosynthesis; coenzyme A biosynthesis; CoA from (R)-pantothenate: step 5/5. In terms of biological role, catalyzes the phosphorylation of the 3'-hydroxyl group of dephosphocoenzyme A to form coenzyme A. The sequence is that of Dephospho-CoA kinase from Chlorobium chlorochromatii (strain CaD3).